The following is a 66-amino-acid chain: UPF0434 protein Jann_0424 (66 aa).

Belongs to the UPF0434 family.

In Jannaschia sp. (strain CCS1), this protein is UPF0434 protein Jann_0424.